We begin with the raw amino-acid sequence, 184 residues long: Photosystem I assembly protein Ycf4 (184 aa).

Helical transmembrane passes span 19–39 (ISNF…LLVG) and 57–77 (IIFF…LFIS).

It belongs to the Ycf4 family.

The protein localises to the plastid. The protein resides in the chloroplast thylakoid membrane. Its function is as follows. Seems to be required for the assembly of the photosystem I complex. This is Photosystem I assembly protein Ycf4 from Drimys granadensis.